We begin with the raw amino-acid sequence, 634 residues long: Genetic interactor of prohibitins 3, mitochondrial (634 aa).

The transit peptide at 1 to 40 (MFSRLVLLRKVSISLGRYYSSQAHPQTYIYNLLSKSKCRS) directs the protein to the mitochondrion. The CP-type G domain maps to 171-378 (IPKLQQVLST…LFDVPGFTTN (208 aa)).

It belongs to the TRAFAC class YlqF/YawG GTPase family. GEP3 subfamily.

It localises to the mitochondrion. Its function is as follows. May be involved in the mitochondrial lipid metabolism. The protein is Genetic interactor of prohibitins 3, mitochondrial (GEP3) of Candida dubliniensis (strain CD36 / ATCC MYA-646 / CBS 7987 / NCPF 3949 / NRRL Y-17841) (Yeast).